A 192-amino-acid polypeptide reads, in one-letter code: Threonylcarbamoyl-AMP synthase (192 aa).

A YrdC-like domain is found at 5–192 (TTSVAEAAHC…DATTGRVIRD (188 aa)).

It belongs to the SUA5 family. TsaC subfamily.

It localises to the cytoplasm. The catalysed reaction is L-threonine + hydrogencarbonate + ATP = L-threonylcarbamoyladenylate + diphosphate + H2O. Required for the formation of a threonylcarbamoyl group on adenosine at position 37 (t(6)A37) in tRNAs that read codons beginning with adenine. Catalyzes the conversion of L-threonine, HCO(3)(-)/CO(2) and ATP to give threonylcarbamoyl-AMP (TC-AMP) as the acyladenylate intermediate, with the release of diphosphate. The polypeptide is Threonylcarbamoyl-AMP synthase (Acinetobacter baylyi (strain ATCC 33305 / BD413 / ADP1)).